The sequence spans 249 residues: 5'-nucleotidase SurE (249 aa).

The a divalent metal cation site is built by Asp-8, Asp-9, Ser-39, and Asn-91.

It belongs to the SurE nucleotidase family. A divalent metal cation serves as cofactor.

The protein resides in the cytoplasm. The enzyme catalyses a ribonucleoside 5'-phosphate + H2O = a ribonucleoside + phosphate. Functionally, nucleotidase that shows phosphatase activity on nucleoside 5'-monophosphates. In Stutzerimonas stutzeri (strain A1501) (Pseudomonas stutzeri), this protein is 5'-nucleotidase SurE.